A 118-amino-acid polypeptide reads, in one-letter code: Small ribosomal subunit protein uS13 (118 aa).

The tract at residues 94–118 (GLPVRGQRTKTNARTRKGPRKPIKK) is disordered.

Belongs to the universal ribosomal protein uS13 family. Part of the 30S ribosomal subunit. Forms a loose heterodimer with protein S19. Forms two bridges to the 50S subunit in the 70S ribosome.

In terms of biological role, located at the top of the head of the 30S subunit, it contacts several helices of the 16S rRNA. In the 70S ribosome it contacts the 23S rRNA (bridge B1a) and protein L5 of the 50S subunit (bridge B1b), connecting the 2 subunits; these bridges are implicated in subunit movement. Contacts the tRNAs in the A and P-sites. The polypeptide is Small ribosomal subunit protein uS13 (Klebsiella pneumoniae (strain 342)).